The sequence spans 127 residues: MCPGGKAPRKQLATKAARKNAIVVGAVKKPHRFRPGTVALREIRRYQKSTDLLLRKLPFQRLVREIAQDVKQDLRFQSAAIQALQEASEYFLVGLFEDTNLCAIHAKRVTIMPKDMQLARRIRGERN.

N6-acetyllysine occurs at positions 6 and 15. N6-methylated lysine is present on residues Lys19, Lys28, and Lys71.

The protein belongs to the histone H3 family. The nucleosome is a histone octamer containing two molecules each of H2A, H2B, H3 and H4 assembled in one H3-H4 heterotetramer and two H2A-H2B heterodimers. The octamer wraps approximately 147 bp of DNA. Post-translationally, acetylation is generally linked to gene activation.

The protein localises to the nucleus. Its subcellular location is the chromosome. Functionally, putative variant histone H3 which may replace conventional H3 in a subset of nucleosomes. Nucleosomes wrap and compact DNA into chromatin, limiting DNA accessibility to the cellular machineries which require DNA as a template. Histones thereby play a central role in transcription regulation, DNA repair, DNA replication and chromosomal stability. DNA accessibility is regulated via a complex set of post-translational modifications of histones, also called histone code, and nucleosome remodeling. This is Putative histone H3.3-like type 3 (his-69) from Caenorhabditis elegans.